We begin with the raw amino-acid sequence, 1873 residues long: Ankyrin repeat domain-containing protein 31 (1873 aa).

Disordered regions lie at residues 1 to 27 (MEEG…SDLE) and 361 to 380 (EPLS…DQET). Polar residues predominate over residues 361 to 379 (EPLSNKRNSNSVTNSSDQE). ANK repeat units follow at residues 488–517 (FGEN…NVNQ), 521–550 (AGWT…DVNI), and 554–583 (YQIT…DPLF). Positions 707-740 (TGLRKGNLHNVKDPNTNVPKGIGRRKTQHKRTQV) are disordered. A compositionally biased stretch (basic residues) spans 728 to 737 (IGRRKTQHKR). 3 ANK repeats span residues 1154-1183 (RGES…DVNL), 1187-1216 (AGWT…KVNC), and 1220-1249 (DGIL…NPNQ). Disordered regions lie at residues 1242–1263 (QNGA…EADD), 1449–1482 (RSEI…SGSM), 1512–1549 (FSGN…PSQP), and 1606–1634 (CDQD…ASES). A compositionally biased stretch (basic and acidic residues) spans 1250-1263 (KDQKQKSALDEADD). Composition is skewed to polar residues over residues 1460–1482 (ELTS…SGSM) and 1515–1525 (NDMNSKQNGSD). Residues 1535-1544 (RHSDGTEKNK) are compositionally biased toward basic and acidic residues. Polar residues predominate over residues 1621–1632 (KTSSQQSPTGAS). Residues 1683–1778 (KKALNYSTAP…TYLGKELLRY (96 aa)) enclose the RAMA domain.

As to quaternary structure, interacts with REC114; the interaction is direct. Interacts with IHO1.

The protein resides in the nucleus. It is found in the chromosome. In terms of biological role, required for DNA double-strand breaks (DSBs) formation during meiotic recombination. Regulates the spatial and temporal patterns of pre-DSB recombinosome assembly and recombination activity by acting as a scaffold that anchors REC114 and other factors to specific genomic locations, thereby regulating DSB formation. Plays a key role in recombination in the pseudoautosomal regions of sex chromosomes. This is Ankyrin repeat domain-containing protein 31 from Homo sapiens (Human).